We begin with the raw amino-acid sequence, 81 residues long: Styelin-E (81 aa).

An N-terminal signal peptide occupies residues 1 to 22; the sequence is MQMKATILIVLVALFMIQQSEA. Trp24 carries the 6'-bromotryptophan modification. Position 26 is a 3,4-dihydroxyarginine (Arg26). Lys27, Lys30, and Lys34 each carry 4,5-dihydroxylysine. 3',4'-dihydroxyphenylalanine is present on residues Tyr36 and Tyr37. The residue at position 38 (Lys38) is a 4,5-dihydroxylysine. 5-hydroxylysine is present on Lys40. 3',4'-dihydroxyphenylalanine is present on residues Tyr41 and Tyr42. At Lys44 the chain carries 5-hydroxylysine. At Leu54 the chain carries Leucine amide. A propeptide spans 56 to 81 (removed in mature form); the sequence is DMTDEEFQDFMKEVEQAREEELQSRQ.

Contains L-DOPA (3',4'-dihydroxyphenylalanine). Hemocytes and pharyngeal tissues.

It is found in the secreted. Functionally, bactericidal against several Gram-positive and Gram-negative bacteria. This Styela clava (Sea squirt) protein is Styelin-E.